Reading from the N-terminus, the 426-residue chain is Enolase (426 aa).

Gln165 lines the (2R)-2-phosphoglycerate pocket. Glu209 functions as the Proton donor in the catalytic mechanism. Mg(2+) is bound by residues Asp244, Glu287, and Asp313. Residues Lys338, Arg367, Ser368, and Lys389 each coordinate (2R)-2-phosphoglycerate. The active-site Proton acceptor is Lys338.

The protein belongs to the enolase family. The cofactor is Mg(2+).

It is found in the cytoplasm. Its subcellular location is the secreted. The protein localises to the cell surface. It catalyses the reaction (2R)-2-phosphoglycerate = phosphoenolpyruvate + H2O. It participates in carbohydrate degradation; glycolysis; pyruvate from D-glyceraldehyde 3-phosphate: step 4/5. In terms of biological role, catalyzes the reversible conversion of 2-phosphoglycerate (2-PG) into phosphoenolpyruvate (PEP). It is essential for the degradation of carbohydrates via glycolysis. The sequence is that of Enolase from Methanococcus maripaludis (strain C5 / ATCC BAA-1333).